We begin with the raw amino-acid sequence, 40 residues long: Spodomicin (40 aa).

3 disulfides stabilise this stretch: Cys6–Cys20, Cys10–Cys32, and Cys21–Cys39.

Monomer. Post-translationally, contains three disulfide bonds. In terms of tissue distribution, hemolymph.

It is found in the secreted. Functionally, fungicide. This Spodoptera littoralis (Egyptian cotton leafworm) protein is Spodomicin.